The primary structure comprises 542 residues: CTP synthase (542 aa).

The tract at residues 1–265 (MTRYVFITGG…DREILAHFQM (265 aa)) is amidoligase domain. Residue S13 participates in CTP binding. S13 serves as a coordination point for UTP. ATP-binding positions include 14–19 (SLGKGL) and D71. D71 and E139 together coordinate Mg(2+). CTP-binding positions include 146 to 148 (DIE), 186 to 191 (KTKPTQ), and K222. Residues 186-191 (KTKPTQ) and K222 each bind UTP. Position 238–240 (238–240 (RDV)) interacts with ATP. The Glutamine amidotransferase type-1 domain maps to 291–541 (TIAIVGKYTG…IAAAIDQSRL (251 aa)). Residue G353 coordinates L-glutamine. C380 functions as the Nucleophile; for glutamine hydrolysis in the catalytic mechanism. L-glutamine contacts are provided by residues 381–384 (FGMQ), E404, and R469. Active-site residues include H514 and E516.

This sequence belongs to the CTP synthase family. Homotetramer.

The catalysed reaction is UTP + L-glutamine + ATP + H2O = CTP + L-glutamate + ADP + phosphate + 2 H(+). The enzyme catalyses L-glutamine + H2O = L-glutamate + NH4(+). It catalyses the reaction UTP + NH4(+) + ATP = CTP + ADP + phosphate + 2 H(+). The protein operates within pyrimidine metabolism; CTP biosynthesis via de novo pathway; CTP from UDP: step 2/2. Its activity is regulated as follows. Allosterically activated by GTP, when glutamine is the substrate; GTP has no effect on the reaction when ammonia is the substrate. The allosteric effector GTP functions by stabilizing the protein conformation that binds the tetrahedral intermediate(s) formed during glutamine hydrolysis. Inhibited by the product CTP, via allosteric rather than competitive inhibition. Functionally, catalyzes the ATP-dependent amination of UTP to CTP with either L-glutamine or ammonia as the source of nitrogen. Regulates intracellular CTP levels through interactions with the four ribonucleotide triphosphates. The protein is CTP synthase of Methylorubrum extorquens (strain CM4 / NCIMB 13688) (Methylobacterium extorquens).